The sequence spans 451 residues: 23S rRNA (uracil(1939)-C(5))-methyltransferase RlmD (451 aa).

The TRAM domain maps to 20-78; that stretch reads QIPAGKKQRLTIERLSDDGRGIAFLEGKTWFVAGSLAGEEVEARVLNARGKVVEARTER. [4Fe-4S] cluster is bound by residues Cys-91, Cys-97, Cys-100, and Cys-179. S-adenosyl-L-methionine-binding residues include Gln-283, Phe-312, Asn-317, Glu-333, Asp-360, and Asp-381. Cys-407 serves as the catalytic Nucleophile.

Belongs to the class I-like SAM-binding methyltransferase superfamily. RNA M5U methyltransferase family. RlmD subfamily.

The catalysed reaction is uridine(1939) in 23S rRNA + S-adenosyl-L-methionine = 5-methyluridine(1939) in 23S rRNA + S-adenosyl-L-homocysteine + H(+). Its function is as follows. Catalyzes the formation of 5-methyl-uridine at position 1939 (m5U1939) in 23S rRNA. This chain is 23S rRNA (uracil(1939)-C(5))-methyltransferase RlmD, found in Pseudomonas savastanoi pv. phaseolicola (strain 1448A / Race 6) (Pseudomonas syringae pv. phaseolicola (strain 1448A / Race 6)).